The chain runs to 26 residues: Citropin-2.1.3 (26 aa).

Expressed by the dorsal and submental skin glands.

The protein resides in the secreted. The sequence is that of Citropin-2.1.3 from Ranoidea citropa (Australian Blue Mountains tree frog).